The chain runs to 373 residues: Superinfection exclusion protein (373 aa).

The N-terminal stretch at M1–T15 is a signal peptide.

The protein belongs to the serpin family. Orthopoxvirus OPG040 subfamily. Interacts with A56 protein.

The protein resides in the virion membrane. The protein localises to the host cell membrane. Its function is as follows. Prevents cell to cell fusion via its interaction with A56 protein. The A56-K2 complex associates with components of the entry fusion complex (EFC) presumably to avoid superinfection and syncytium formation. This is Superinfection exclusion protein (OPG040) from Homo sapiens (Human).